Here is a 2280-residue protein sequence, read N- to C-terminus: Protein Ycf2 (2280 aa).

Glycine 1634–serine 1641 contributes to the ATP binding site.

Belongs to the Ycf2 family.

It localises to the plastid. The protein localises to the chloroplast stroma. Its function is as follows. Probable ATPase of unknown function. Its presence in a non-photosynthetic plant (Epifagus virginiana) and experiments in tobacco indicate that it has an essential function which is probably not related to photosynthesis. This chain is Protein Ycf2, found in Eucalyptus globulus subsp. globulus (Tasmanian blue gum).